The following is a 379-amino-acid chain: Protein psi1 (379 aa).

The J domain maps to 1-70 (MVADTKLYDC…RKLYDQYGIT (70 aa)). Disordered stretches follow at residues 69–95 (ITEG…FPGA) and 176–205 (FGGG…AQNE). Gly residues predominate over residues 81-95 (AEGGPGAGFGGFPGA).

Functionally, required for nuclear migration during mitosis. It is required for the normal initiation of translation. The polypeptide is Protein psi1 (psi1) (Schizosaccharomyces pombe (strain 972 / ATCC 24843) (Fission yeast)).